A 104-amino-acid polypeptide reads, in one-letter code: L-rhamnose mutarotase (104 aa).

Tyr18 provides a ligand contact to substrate. The active-site Proton donor is the His22. Substrate is bound by residues Tyr41 and 76–77; that span reads WW.

It belongs to the rhamnose mutarotase family. As to quaternary structure, homodimer.

It is found in the cytoplasm. It catalyses the reaction alpha-L-rhamnose = beta-L-rhamnose. It participates in carbohydrate metabolism; L-rhamnose metabolism. Its function is as follows. Involved in the anomeric conversion of L-rhamnose. This chain is L-rhamnose mutarotase, found in Shigella flexneri serotype 5b (strain 8401).